We begin with the raw amino-acid sequence, 452 residues long: DNA primase DnaG (452 aa).

The 77-residue stretch at 172 to 248 (DTVIIVEGRA…DIDYIARAPP (77 aa)) folds into the Toprim domain. Residues glutamate 178, aspartate 222, and aspartate 224 each contribute to the Mg(2+) site. Positions 289–320 (KKQIEQAQVQPSAAPTSPQPQPESTQPTQPIQ) are disordered. Over residues 294 to 320 (QAQVQPSAAPTSPQPQPESTQPTQPIQ) the composition is skewed to low complexity.

Belongs to the archaeal DnaG primase family. As to quaternary structure, forms a ternary complex with MCM helicase and DNA. Component of the archaeal exosome complex. The cofactor is Mg(2+).

It carries out the reaction ssDNA + n NTP = ssDNA/pppN(pN)n-1 hybrid + (n-1) diphosphate.. In terms of biological role, RNA polymerase that catalyzes the synthesis of short RNA molecules used as primers for DNA polymerase during DNA replication. Also part of the exosome, which is a complex involved in RNA degradation. Acts as a poly(A)-binding protein that enhances the interaction between heteromeric, adenine-rich transcripts and the exosome. This chain is DNA primase DnaG, found in Caldivirga maquilingensis (strain ATCC 700844 / DSM 13496 / JCM 10307 / IC-167).